The following is a 348-amino-acid chain: Uroporphyrinogen decarboxylase (348 aa).

Substrate-binding positions include 27-31, Phe46, Asp76, Tyr152, Ser207, and His320; that span reads RQAGR.

This sequence belongs to the uroporphyrinogen decarboxylase family. As to quaternary structure, homodimer.

The protein resides in the cytoplasm. It carries out the reaction uroporphyrinogen III + 4 H(+) = coproporphyrinogen III + 4 CO2. Its pathway is porphyrin-containing compound metabolism; protoporphyrin-IX biosynthesis; coproporphyrinogen-III from 5-aminolevulinate: step 4/4. Its function is as follows. Catalyzes the decarboxylation of four acetate groups of uroporphyrinogen-III to yield coproporphyrinogen-III. The polypeptide is Uroporphyrinogen decarboxylase (Bacillus thuringiensis (strain Al Hakam)).